A 795-amino-acid chain; its full sequence is Protocadherin beta-5 (795 aa).

The first 30 residues, 1-30 (METALAKTPQKRQVMFLAILLLLWEAGSEA), serve as a signal peptide directing secretion. Over 31-689 (VRYSIPEETE…AQADSLTVYL (659 aa)) the chain is Extracellular. 5 consecutive Cadherin domains span residues 35–133 (IPEE…SPEF), 138–242 (MLLK…APEF), 247–346 (YEVQ…APEL), 351–450 (LSSP…APAF), and 455–560 (YTLF…SPFV). The N-linked (GlcNAc...) asparagine glycan is linked to N169. K296 bears the N6-acetyllysine mark. N-linked (GlcNAc...) asparagine glycans are attached at residues N417 and N435. Residue N566 is glycosylated (N-linked (GlcNAc...) asparagine). In terms of domain architecture, Cadherin 6 spans 567 to 670 (GSAPCTELVP…LVDGFSQPYL (104 aa)). A helical membrane pass occupies residues 690–710 (VVALASVSSLFLFSVLLFVAV). The Cytoplasmic portion of the chain corresponds to 711–795 (RLCRRSRAAP…AAFRNSFGLN (85 aa)).

Its subcellular location is the cell membrane. In terms of biological role, potential calcium-dependent cell-adhesion protein. May be involved in the establishment and maintenance of specific neuronal connections in the brain. The chain is Protocadherin beta-5 (PCDHB5) from Pan troglodytes (Chimpanzee).